Consider the following 869-residue polypeptide: Mismatch repair endonuclease PMS2 (869 aa).

Residues asparagine 44, aspartate 69, glutamate 108, alanine 109, and leucine 110 each coordinate ATP. Residues 585–588 (RRFK) carry the Nuclear localization signal motif.

This sequence belongs to the DNA mismatch repair MutL/HexB family.

It localises to the nucleus. The enzyme catalyses ATP + H2O = ADP + phosphate + H(+). Component of the post-replicative DNA mismatch repair system (MMR). Involved in B cell growth by positively regulating B cell proliferation and controlling replication efficiency. Controls cell cycle to prevent re-replication and defects in DNA damage-induced G2 checkpoint. Doesn't seem to counteract or control the immunoglobulin gene conversion (Ig GC) and to contribute to guanine/uracil mismatch repair. Possesses an ATPase activity, but in the absence of gross structural changes, ATP hydrolysis may not be necessary for proficient mismatch repair. The chain is Mismatch repair endonuclease PMS2 from Gallus gallus (Chicken).